We begin with the raw amino-acid sequence, 57 residues long: Large ribosomal subunit protein bL32 (57 aa).

The tract at residues 1-25 is disordered; that stretch reads MATPSNKNSKSHKRNRRGHIGLNVP. The span at 9–19 shows a compositional bias: basic residues; sequence SKSHKRNRRGH.

This sequence belongs to the bacterial ribosomal protein bL32 family.

The polypeptide is Large ribosomal subunit protein bL32 (Leuconostoc mesenteroides subsp. mesenteroides (strain ATCC 8293 / DSM 20343 / BCRC 11652 / CCM 1803 / JCM 6124 / NCDO 523 / NBRC 100496 / NCIMB 8023 / NCTC 12954 / NRRL B-1118 / 37Y)).